A 993-amino-acid polypeptide reads, in one-letter code: Desmoglein-3 (993 aa).

Positions methionine 1–glycine 23 are cleaved as a signal peptide. Positions glutamate 24–arginine 49 are excised as a propeptide. Cadherin domains follow at residues glutamate 50–phenylalanine 157, serine 158–leucine 267, arginine 268–lysine 388, and arginine 384–valine 495. The Extracellular portion of the chain corresponds to glutamate 50–proline 617. N-linked (GlcNAc...) asparagine glycans are attached at residues asparagine 110 and asparagine 180. N-linked (GlcNAc...) asparagine glycans are attached at residues asparagine 459 and asparagine 546. Residues alanine 618–leucine 638 form a helical membrane-spanning segment. The Cytoplasmic portion of the chain corresponds to threonine 639–leucine 993. Positions aspartate 641–glutamate 714 are required for interaction with CTNND1 and localization at cell-cell junctions. Residues alanine 845–tyrosine 876 form a disordered region. 2 Desmoglein repeat repeats span residues methionine 905–glutamate 930 and threonine 931–isoleucine 961.

In terms of assembly, homodimer. Part of a complex that contains DSG3, PKP1, YAP1 and YWHAG; the complex is required for localization of DSG3 and YAP1 to the cell membrane in keratinocytes. Interacts with PKP2. Interacts with CTNND1; the interaction facilitates DSG3 localization and retention at cell-cell junctions. Interacts with CDH1; the interaction is required for CDH1 localization to developing adherens junctions. Interacts with RAC1; the interaction is required for DSG3 translocation to cell-cell junctions, organization of cortical F-actin bundles and actin anchoring at cell-cell junctions. Interacts with DSC3; the interaction may limit the interaction of DSC3 with p38MAPK family members and therefore repress p38MAPK signaling activation. As to expression, expressed in the basal layer of the outer root sheath of the telogen hair club, specifically at the cell membrane between the apex of the cells and the surrounding hair club (at protein level). Expression is less abundant between the lateral margins of the outer root sheath basal cells (at protein level). Expressed in epidermis. Expressed in the epithelium of the tongue.

The protein resides in the cell membrane. It localises to the cell junction. Its subcellular location is the desmosome. The protein localises to the cytoplasm. It is found in the tight junction. A component of desmosome cell-cell junctions which are required for positive regulation of cellular adhesion. Required for adherens and desmosome junction assembly in response to mechanical force in keratinocytes. Required for desmosome-mediated cell-cell adhesion of cells surrounding the telogen hair club and the basal layer of the outer root sheath epithelium, consequently is essential for the anchoring of telogen hairs in the hair follicle. Required for the maintenance of the epithelial barrier via promoting desmosome-mediated intercellular attachment of suprabasal epithelium to basal cells. May play a role in the protein stability of the desmosome plaque components DSP, JUP, PKP1, PKP2 and PKP3. Required for YAP1 localization at the plasma membrane in keratinocytes in response to mechanical strain, via the formation of an interaction complex composed of DSG3, PKP1 and YWHAG. May also be involved in the positive regulation of YAP1 target gene transcription and as a result cell proliferation. Positively regulates cellular contractility and cell junction formation via organization of cortical F-actin bundles and anchoring of actin to tight junctions, in conjunction with RAC1. The cytoplasmic pool of DSG3 is required for the localization of CDH1 and CTNNB1 at developing adherens junctions, potentially via modulation of SRC activity. Inhibits keratinocyte migration via suppression of p38MAPK signaling, may therefore play a role in moderating wound healing. The chain is Desmoglein-3 (Dsg3) from Mus musculus (Mouse).